The following is a 488-amino-acid chain: N-succinylglutamate 5-semialdehyde dehydrogenase (488 aa).

221 to 226 serves as a coordination point for NAD(+); the sequence is GSSRTG. Catalysis depends on residues E244 and C278.

This sequence belongs to the aldehyde dehydrogenase family. AstD subfamily.

The enzyme catalyses N-succinyl-L-glutamate 5-semialdehyde + NAD(+) + H2O = N-succinyl-L-glutamate + NADH + 2 H(+). The protein operates within amino-acid degradation; L-arginine degradation via AST pathway; L-glutamate and succinate from L-arginine: step 4/5. In terms of biological role, catalyzes the NAD-dependent reduction of succinylglutamate semialdehyde into succinylglutamate. This is N-succinylglutamate 5-semialdehyde dehydrogenase from Pseudomonas fluorescens (strain ATCC BAA-477 / NRRL B-23932 / Pf-5).